Here is a 247-residue protein sequence, read N- to C-terminus: Probable membrane transporter protein y4hK (247 aa).

6 helical membrane-spanning segments follow: residues 5-25, 31-51, 74-94, 121-141, 202-222, and 227-247; these read AIGL…VGQA, IAAM…ALAL, VYPF…VHLP, SALV…ITGA, FLPW…LIGS, and ASWL…KLLW.

This sequence belongs to the 4-toluene sulfonate uptake permease (TSUP) (TC 2.A.102) family.

Its subcellular location is the cell membrane. The protein is Probable membrane transporter protein y4hK of Sinorhizobium fredii (strain NBRC 101917 / NGR234).